Consider the following 185-residue polypeptide: Orotate phosphoribosyltransferase (185 aa).

5-phospho-alpha-D-ribose 1-diphosphate is bound by residues R99, K100, K103, and 125-133 (EDVTTTGGS). Orotate is bound by residues T129 and R157.

The protein belongs to the purine/pyrimidine phosphoribosyltransferase family. PyrE subfamily. As to quaternary structure, homodimer. It depends on Mg(2+) as a cofactor.

The catalysed reaction is orotidine 5'-phosphate + diphosphate = orotate + 5-phospho-alpha-D-ribose 1-diphosphate. Its pathway is pyrimidine metabolism; UMP biosynthesis via de novo pathway; UMP from orotate: step 1/2. Its function is as follows. Catalyzes the transfer of a ribosyl phosphate group from 5-phosphoribose 1-diphosphate to orotate, leading to the formation of orotidine monophosphate (OMP). The protein is Orotate phosphoribosyltransferase of Methanococcus maripaludis (strain DSM 14266 / JCM 13030 / NBRC 101832 / S2 / LL).